We begin with the raw amino-acid sequence, 308 residues long: Regulating synaptic membrane exocytosis protein 3 (308 aa).

The segment at 86–120 is disordered; sequence STETGIAVEMRSRVTRQGSRESTDGSTNSNSSDGT. Low complexity predominate over residues 109-120; it reads DGSTNSNSSDGT. The C2 domain occupies 156–274; that stretch reads PMGDVHIAIM…DLSAAVTGWY (119 aa). Phosphoserine occurs at positions 295 and 298.

In terms of assembly, binds PPFIA3. Does not bind RAB3.

Its subcellular location is the synapse. In terms of biological role, regulates synaptic membrane exocytosis. This Homo sapiens (Human) protein is Regulating synaptic membrane exocytosis protein 3 (RIMS3).